We begin with the raw amino-acid sequence, 212 residues long: MSARIVVTGTDTGIGKTVFAAALAGALDATYWKPVQSGLEDETDSGAVQRLSGLAADRILPERYRLRTPASPHLAAEIDGVDIDVAALELPSVSRPLVVEGAGGLMVPLTRETTYIDVFARWAAPLVLCARTSLGTINHTLLSIEAIRARDIPLLGVAFLGDENLDSEQIIVELGHTRRLGRLPRLERLDAAALRAAFAAAFEPRDFLGDAP.

13–18 (GIGKTV) contacts ATP. T17 is a Mg(2+) binding site. K33 is a catalytic residue. Residue S37 participates in substrate binding. E100 contributes to the Mg(2+) binding site. Residues 100 to 103 (EGAG) and 184 to 186 (PRL) contribute to the ATP site.

Belongs to the dethiobiotin synthetase family. In terms of assembly, homodimer. It depends on Mg(2+) as a cofactor.

Its subcellular location is the cytoplasm. The enzyme catalyses (7R,8S)-7,8-diammoniononanoate + CO2 + ATP = (4R,5S)-dethiobiotin + ADP + phosphate + 3 H(+). It functions in the pathway cofactor biosynthesis; biotin biosynthesis; biotin from 7,8-diaminononanoate: step 1/2. Catalyzes a mechanistically unusual reaction, the ATP-dependent insertion of CO2 between the N7 and N8 nitrogen atoms of 7,8-diaminopelargonic acid (DAPA, also called 7,8-diammoniononanoate) to form a ureido ring. The sequence is that of ATP-dependent dethiobiotin synthetase BioD from Rhodopseudomonas palustris (strain TIE-1).